Here is a 417-residue protein sequence, read N- to C-terminus: Multifunctional CCA protein (417 aa).

Residues Gly-8 and Arg-11 each coordinate ATP. CTP is bound by residues Gly-8 and Arg-11. The Mg(2+) site is built by Asp-21 and Asp-23. ATP is bound by residues Arg-91, Arg-137, and Arg-140. CTP is bound by residues Arg-91, Arg-137, and Arg-140. Positions 225–326 (SGIHTLMTLQ…LNVLKKTDAF (102 aa)) constitute an HD domain.

Belongs to the tRNA nucleotidyltransferase/poly(A) polymerase family. Bacterial CCA-adding enzyme type 1 subfamily. As to quaternary structure, monomer. Can also form homodimers and oligomers. Mg(2+) serves as cofactor. It depends on Ni(2+) as a cofactor.

It carries out the reaction a tRNA precursor + 2 CTP + ATP = a tRNA with a 3' CCA end + 3 diphosphate. The catalysed reaction is a tRNA with a 3' CCA end + 2 CTP + ATP = a tRNA with a 3' CCACCA end + 3 diphosphate. Functionally, catalyzes the addition and repair of the essential 3'-terminal CCA sequence in tRNAs without using a nucleic acid template. Adds these three nucleotides in the order of C, C, and A to the tRNA nucleotide-73, using CTP and ATP as substrates and producing inorganic pyrophosphate. tRNA 3'-terminal CCA addition is required both for tRNA processing and repair. Also involved in tRNA surveillance by mediating tandem CCA addition to generate a CCACCA at the 3' terminus of unstable tRNAs. While stable tRNAs receive only 3'-terminal CCA, unstable tRNAs are marked with CCACCA and rapidly degraded. In Neisseria meningitidis serogroup B (strain ATCC BAA-335 / MC58), this protein is Multifunctional CCA protein.